A 164-amino-acid polypeptide reads, in one-letter code: MVAHTRADSAPKPTDPALAGARILVVEARYYDAIADELLAGALAAIEAADARATVVTVPGALEIPAAAAILLDTGAYDAVVALGCVIRGETGHYDIVAGESARALMDLSVQRRVPLGNGILTVETEAQALARARVAEMNKGGGAAEAALGVLALKRMADGARPR.

Residues tyrosine 30, 61–63, and 85–87 contribute to the 5-amino-6-(D-ribitylamino)uracil site; these read ALE and CVI. Residue 90–91 participates in (2S)-2-hydroxy-3-oxobutyl phosphate binding; that stretch reads ET. Histidine 93 serves as the catalytic Proton donor. Asparagine 118 is a binding site for 5-amino-6-(D-ribitylamino)uracil. Arginine 132 provides a ligand contact to (2S)-2-hydroxy-3-oxobutyl phosphate.

The protein belongs to the DMRL synthase family.

It carries out the reaction (2S)-2-hydroxy-3-oxobutyl phosphate + 5-amino-6-(D-ribitylamino)uracil = 6,7-dimethyl-8-(1-D-ribityl)lumazine + phosphate + 2 H2O + H(+). It functions in the pathway cofactor biosynthesis; riboflavin biosynthesis; riboflavin from 2-hydroxy-3-oxobutyl phosphate and 5-amino-6-(D-ribitylamino)uracil: step 1/2. In terms of biological role, catalyzes the formation of 6,7-dimethyl-8-ribityllumazine by condensation of 5-amino-6-(D-ribitylamino)uracil with 3,4-dihydroxy-2-butanone 4-phosphate. This is the penultimate step in the biosynthesis of riboflavin. The polypeptide is 6,7-dimethyl-8-ribityllumazine synthase (Methylobacterium radiotolerans (strain ATCC 27329 / DSM 1819 / JCM 2831 / NBRC 15690 / NCIMB 10815 / 0-1)).